The chain runs to 738 residues: Catalase-peroxidase (738 aa).

The interval Met-1–Gly-24 is disordered. A cross-link (tryptophyl-tyrosyl-methioninium (Trp-Tyr) (with M-257)) is located at residues Trp-108–Tyr-231. Catalysis depends on His-109, which acts as the Proton acceptor. Residues Tyr-231 to Met-257 constitute a cross-link (tryptophyl-tyrosyl-methioninium (Tyr-Met) (with W-108)). His-272 is a binding site for heme b.

It belongs to the peroxidase family. Peroxidase/catalase subfamily. In terms of assembly, homodimer or homotetramer. The cofactor is heme b. Post-translationally, formation of the three residue Trp-Tyr-Met cross-link is important for the catalase, but not the peroxidase activity of the enzyme.

It carries out the reaction H2O2 + AH2 = A + 2 H2O. The enzyme catalyses 2 H2O2 = O2 + 2 H2O. Its function is as follows. Bifunctional enzyme with both catalase and broad-spectrum peroxidase activity. This is Catalase-peroxidase from Mycobacteroides abscessus (strain ATCC 19977 / DSM 44196 / CCUG 20993 / CIP 104536 / JCM 13569 / NCTC 13031 / TMC 1543 / L948) (Mycobacterium abscessus).